The chain runs to 260 residues: Flap endonuclease Xni (260 aa).

Mg(2+) is bound at residue aspartate 105. The region spanning asparagine 164–alanine 259 is the 5'-3' exonuclease domain. K(+) contacts are provided by leucine 172, alanine 173, proline 181, isoleucine 183, and isoleucine 186. Residues glycine 185–serine 190 are interaction with DNA.

Belongs to the Xni family. The cofactor is Mg(2+). K(+) is required as a cofactor.

In terms of biological role, has flap endonuclease activity. During DNA replication, flap endonucleases cleave the 5'-overhanging flap structure that is generated by displacement synthesis when DNA polymerase encounters the 5'-end of a downstream Okazaki fragment. In Shewanella sp. (strain MR-4), this protein is Flap endonuclease Xni.